We begin with the raw amino-acid sequence, 606 residues long: Phosphogluconate dehydratase (606 aa).

[4Fe-4S] cluster contacts are provided by cysteine 156 and cysteine 223.

The protein belongs to the IlvD/Edd family. The cofactor is [4Fe-4S] cluster.

It catalyses the reaction 6-phospho-D-gluconate = 2-dehydro-3-deoxy-6-phospho-D-gluconate + H2O. It functions in the pathway carbohydrate metabolism; Entner-Doudoroff pathway. Catalyzes the dehydration of 6-phospho-D-gluconate to 2-dehydro-3-deoxy-6-phospho-D-gluconate. This is Phosphogluconate dehydratase from Rhizobium meliloti (strain 1021) (Ensifer meliloti).